Consider the following 151-residue polypeptide: UPF0179 protein MJ1627 (151 aa).

The protein belongs to the UPF0179 family.

The sequence is that of UPF0179 protein MJ1627 from Methanocaldococcus jannaschii (strain ATCC 43067 / DSM 2661 / JAL-1 / JCM 10045 / NBRC 100440) (Methanococcus jannaschii).